The sequence spans 106 residues: UPF0473 protein LCABL_08490 (106 aa).

The protein belongs to the UPF0473 family.

The sequence is that of UPF0473 protein LCABL_08490 from Lacticaseibacillus casei (strain BL23) (Lactobacillus casei).